Consider the following 407-residue polypeptide: E3 ubiquitin-protein ligase TRIM13 (407 aa).

The segment at 10–58 (CPICCSLFDDPRVLPCSHNFCKKCLEGILEGNVRNSLWRSSPFKCPTCR) adopts an RING-type zinc-finger fold. Residues 89 to 131 (PKMPVCKGHLGQPLNIFCLTDMQLICGICATRGEHTKHVFCSI) form a B box-type zinc finger. Zn(2+) is bound by residues cysteine 94, histidine 97, cysteine 117, and histidine 123. Positions 172 to 200 (LQLLTKDSDKVKEFFEKLQYTLDQKKNEI) form a coiled coil. The helical transmembrane segment at 316 to 336 (PLFVVVILLGLLIFFSPTMFL) threads the bilayer.

As to quaternary structure, interacts (via C-terminal domain) with VCP. Interacts with AKT1; the interaction ubiquitinates AKT1 and leads to its proteasomal degradation. Interacts with MDM2; the interaction ubiquitinates AKT1 and leads to its proteasomal degradation. Interacts with p62/SQSTM1. Interacts with TRAF6. Interacts with IKBKG/NEMO. In terms of processing, auto-ubiquitinated; requires the RING-type zinc finger. Auto-polyubiquitination leads to proteasomal degradation.

The protein resides in the endoplasmic reticulum membrane. The catalysed reaction is S-ubiquitinyl-[E2 ubiquitin-conjugating enzyme]-L-cysteine + [acceptor protein]-L-lysine = [E2 ubiquitin-conjugating enzyme]-L-cysteine + N(6)-ubiquitinyl-[acceptor protein]-L-lysine.. Its pathway is protein modification; protein ubiquitination. Endoplasmic reticulum (ER) membrane anchored E3 ligase involved in the retrotranslocation and turnover of membrane and secretory proteins from the ER through a set of processes named ER-associated degradation (ERAD). This process acts on misfolded proteins as well as in the regulated degradation of correctly folded proteins. Enhances ionizing radiation-induced p53/TP53 stability and apoptosis via ubiquitinating MDM2 and AKT1 and decreasing AKT1 kinase activity through MDM2 and AKT1 proteasomal degradation. Regulates ER stress-induced autophagy, and may act as a tumor suppressor. Also plays a role in innate immune response by stimulating NF-kappa-B activity in the TLR2 signaling pathway. Ubiquitinates TRAF6 via the 'Lys-29'-linked polyubiquitination chain resulting in NF-kappa-B activation. Participates as well in T-cell receptor-mediated NF-kappa-B activation. In the presence of TNF, modulates the IKK complex by regulating IKBKG/NEMO ubiquitination leading to the repression of NF-kappa-B. The protein is E3 ubiquitin-protein ligase TRIM13 (TRIM13) of Bos taurus (Bovine).